We begin with the raw amino-acid sequence, 295 residues long: HTH-type transcriptional regulator TdfR (295 aa).

The 58-residue stretch at 1–58 (MEFRQLRYFVAAAEEGNVGAAARRLHISQPPVTRQIHALEQHLGVLLFERSARGVQLT) folds into the HTH lysR-type domain. The segment at residues 18–37 (VGAAARRLHISQPPVTRQIH) is a DNA-binding region (H-T-H motif).

Belongs to the LysR transcriptional regulatory family.

Its subcellular location is the cytoplasm. Functionally, involved in the regulation of 3-chlorocatechol degradation. Transcriptional regulator of tfdB expression. Acts as a repressor in the absence of its effector (either 2-cis-chlorodiene lactone or chloromaleylacetate) but acts as an activator when its effector is present. The sequence is that of HTH-type transcriptional regulator TdfR (tfdR) from Cupriavidus pinatubonensis (strain JMP 134 / LMG 1197) (Cupriavidus necator (strain JMP 134)).